The primary structure comprises 125 residues: uncharacterized protein (125 aa).

The transit peptide at M1–S46 directs the protein to the chloroplast.

It localises to the plastid. The protein localises to the chloroplast. This is an uncharacterized protein from Arabidopsis thaliana (Mouse-ear cress).